The chain runs to 180 residues: Large ribosomal subunit protein uL5 (180 aa).

Belongs to the universal ribosomal protein uL5 family. Part of the 50S ribosomal subunit; part of the 5S rRNA/L5/L18/L25 subcomplex. Contacts the 5S rRNA and the P site tRNA. Forms a bridge to the 30S subunit in the 70S ribosome.

This is one of the proteins that bind and probably mediate the attachment of the 5S RNA into the large ribosomal subunit, where it forms part of the central protuberance. In the 70S ribosome it contacts protein S13 of the 30S subunit (bridge B1b), connecting the 2 subunits; this bridge is implicated in subunit movement. Contacts the P site tRNA; the 5S rRNA and some of its associated proteins might help stabilize positioning of ribosome-bound tRNAs. This is Large ribosomal subunit protein uL5 from Heliobacterium modesticaldum (strain ATCC 51547 / Ice1).